The sequence spans 110 residues: Ig lambda-1 chain V region S178 (110 aa).

Positions 1 to 106 constitute an Ig-like domain; sequence QAVVTQESAL…RWVFGGGTKL (106 aa).

The chain is Ig lambda-1 chain V region S178 from Mus musculus (Mouse).